Reading from the N-terminus, the 117-residue chain is MGVWSVVLYLLNTLIVPFRDERAKFEIERVSAEEAKKIIQMHNSQFVSAIGHSASANALSLLLGVAVPVNRTEVFFNVGDEAIAMALKKRLAEGQVLRTVQELEAVGFDLYYIKRVQ.

This is an uncharacterized protein from Acidianus two-tailed virus (ATV).